Here is a 96-residue protein sequence, read N- to C-terminus: Large ribosomal subunit protein uL18m (96 aa).

The protein belongs to the universal ribosomal protein uL18 family.

The protein resides in the mitochondrion. The protein is Large ribosomal subunit protein uL18m (RPL18) of Reclinomonas americana.